The primary structure comprises 369 residues: D-glucosaminate-6-phosphate ammonia lyase (369 aa).

An N6-(pyridoxal phosphate)lysine modification is found at lysine 213.

The protein belongs to the SelA family. Pyridoxal 5'-phosphate serves as cofactor.

It catalyses the reaction 2-amino-2-deoxy-D-gluconate 6-phosphate = 2-dehydro-3-deoxy-6-phospho-D-gluconate + NH4(+). Its function is as follows. Involved in the catabolism of D-glucosaminate. Catalyzes the conversion of D-glucosaminate 6-phosphate to yield keto-3-deoxygluconate 6-phosphate (KDGP). This chain is D-glucosaminate-6-phosphate ammonia lyase, found in Salmonella typhimurium (strain 14028s / SGSC 2262).